The chain runs to 526 residues: Bifunctional purine biosynthesis protein PurH (526 aa).

Residues 1–147 (MSSIKRALIS…KNWKHVAIVT (147 aa)) enclose the MGS-like domain.

This sequence belongs to the PurH family.

It catalyses the reaction (6R)-10-formyltetrahydrofolate + 5-amino-1-(5-phospho-beta-D-ribosyl)imidazole-4-carboxamide = 5-formamido-1-(5-phospho-D-ribosyl)imidazole-4-carboxamide + (6S)-5,6,7,8-tetrahydrofolate. It carries out the reaction IMP + H2O = 5-formamido-1-(5-phospho-D-ribosyl)imidazole-4-carboxamide. It participates in purine metabolism; IMP biosynthesis via de novo pathway; 5-formamido-1-(5-phospho-D-ribosyl)imidazole-4-carboxamide from 5-amino-1-(5-phospho-D-ribosyl)imidazole-4-carboxamide (10-formyl THF route): step 1/1. The protein operates within purine metabolism; IMP biosynthesis via de novo pathway; IMP from 5-formamido-1-(5-phospho-D-ribosyl)imidazole-4-carboxamide: step 1/1. This chain is Bifunctional purine biosynthesis protein PurH, found in Neisseria meningitidis serogroup B (strain ATCC BAA-335 / MC58).